A 193-amino-acid chain; its full sequence is ATP-dependent Clp protease proteolytic subunit (193 aa).

The active-site Nucleophile is the serine 98. Histidine 123 is a catalytic residue.

This sequence belongs to the peptidase S14 family. Fourteen ClpP subunits assemble into 2 heptameric rings which stack back to back to give a disk-like structure with a central cavity, resembling the structure of eukaryotic proteasomes.

It is found in the cytoplasm. The enzyme catalyses Hydrolysis of proteins to small peptides in the presence of ATP and magnesium. alpha-casein is the usual test substrate. In the absence of ATP, only oligopeptides shorter than five residues are hydrolyzed (such as succinyl-Leu-Tyr-|-NHMec, and Leu-Tyr-Leu-|-Tyr-Trp, in which cleavage of the -Tyr-|-Leu- and -Tyr-|-Trp bonds also occurs).. Cleaves peptides in various proteins in a process that requires ATP hydrolysis. Has a chymotrypsin-like activity. Plays a major role in the degradation of misfolded proteins. This Glaesserella parasuis serovar 5 (strain SH0165) (Haemophilus parasuis) protein is ATP-dependent Clp protease proteolytic subunit.